A 276-amino-acid chain; its full sequence is Secreted RxLR effector protein 120 (276 aa).

The signal sequence occupies residues 1-21; sequence MRGAYYVITALLVVASSQTSA. The RxLR-dEER signature appears at 48–65; the sequence is QSLRGSRDVPDDLAHEER. Positions 97 to 130 are disordered; the sequence is GKRPRVAEKDALEKASGADEASKKPRNTATDDAF. Residues 101 to 119 are compositionally biased toward basic and acidic residues; sequence RVAEKDALEKASGADEASK.

It belongs to the RxLR effector family.

It localises to the secreted. Its subcellular location is the host nucleus. Secreted effector that completely suppresses the host cell death induced by cell death-inducing proteins. This Plasmopara viticola (Downy mildew of grapevine) protein is Secreted RxLR effector protein 120.